The primary structure comprises 356 residues: Arginine kinase (356 aa).

The 84-residue stretch at 8-91 folds into the Phosphagen kinase N-terminal domain; it reads EKLEAGFKKL…FDPIIEDYHG (84 aa). 64 to 68 lines the substrate pocket; it reads GVGIY. The Phosphagen kinase C-terminal domain occupies 119 to 356; sequence YVISTRVRCG…LELIKIEGSL (238 aa). Residues 122 to 126 and His-185 each bind ATP; that span reads STRVR. Glu-225 lines the substrate pocket. Position 229 (Arg-229) interacts with ATP. Residue Cys-271 participates in substrate binding. ATP-binding positions include 280–284 and 309–314; these read RASVH and RGSTGE. Glu-314 provides a ligand contact to substrate.

It belongs to the ATP:guanido phosphotransferase family.

It carries out the reaction L-arginine + ATP = N(omega)-phospho-L-arginine + ADP + H(+). The sequence is that of Arginine kinase (ARGK) from Schistocerca americana (American grasshopper).